The following is a 386-amino-acid chain: Bifunctional chorismate mutase/prephenate dehydratase (386 aa).

The region spanning 1-92 (MTSENPLLAL…DSVLTQQALL (92 aa)) is the Chorismate mutase domain. Residues Arg-11, Arg-28, Lys-39, Asp-48, Glu-52, Ser-84, and Gln-88 each contribute to the substrate site. The region spanning 105 to 285 (RIAFLGPKGS…NFTRFVVLAR (181 aa)) is the Prephenate dehydratase domain. Residues 299 to 376 (TLLMATGQQA…RSMKVLGCYP (78 aa)) form the ACT domain.

It localises to the cytoplasm. It catalyses the reaction chorismate = prephenate. The catalysed reaction is prephenate + H(+) = 3-phenylpyruvate + CO2 + H2O. It participates in amino-acid biosynthesis; L-phenylalanine biosynthesis; phenylpyruvate from prephenate: step 1/1. It functions in the pathway metabolic intermediate biosynthesis; prephenate biosynthesis; prephenate from chorismate: step 1/1. Catalyzes the Claisen rearrangement of chorismate to prephenate and the decarboxylation/dehydration of prephenate to phenylpyruvate. The chain is Bifunctional chorismate mutase/prephenate dehydratase (pheA) from Escherichia coli O157:H7.